The primary structure comprises 184 residues: Ras-related protein Rap-1b (184 aa).

GTP is bound at residue glycine 10–serine 17. An Effector region motif is present at residues tyrosine 32–tyrosine 40. Residues aspartate 57–threonine 61 and asparagine 116–aspartate 119 each bind GTP. Cysteine 181 is modified (cysteine methyl ester). Residue cysteine 181 is the site of S-geranylgeranyl cysteine attachment. The propeptide at histidine 182–leucine 184 is removed in mature form.

This sequence belongs to the small GTPase superfamily. Ras family.

It is found in the cell membrane. The protein localises to the cytoplasm. Its subcellular location is the cytosol. It localises to the cell junction. It carries out the reaction GTP + H2O = GDP + phosphate + H(+). Its function is as follows. Probable GTP-binding protein that possesses GTPase activity. May play a role in endothelial cell polarity and endothelial barrier function. The polypeptide is Ras-related protein Rap-1b (rap1b) (Xenopus laevis (African clawed frog)).